The primary structure comprises 175 residues: Thioredoxin-like protein CITRX, chloroplastic (175 aa).

Residues 1–64 (MQAASLAFHP…KPPAVGKYVR (64 aa)) constitute a chloroplast transit peptide. Residues 74-175 (AKEIQELIKG…MMRDIIDNDL (102 aa)) enclose the Thioredoxin domain. Catalysis depends on nucleophile residues C98 and C101. A disulfide bond links C98 and C101.

The protein belongs to the thioredoxin family. Plant CITRX-type subfamily. In terms of assembly, interacts with Cf-9 resistance protein.

The protein resides in the plastid. Its subcellular location is the chloroplast. Its function is as follows. Probable thiol-disulfide oxidoreductase that may play a role in proper chloroplast development. This is Thioredoxin-like protein CITRX, chloroplastic from Solanum lycopersicum (Tomato).